Reading from the N-terminus, the 105-residue chain is ESAT-6-like protein EsxB (105 aa).

A disordered region spans residues 1–23; sequence MSQGFKTEADVMRNTAHRVDDTN. Over residues 7 to 21 the composition is skewed to basic and acidic residues; the sequence is TEADVMRNTAHRVDD.

It belongs to the WXG100 family. CFP-10 subfamily. Forms a tight 1:1 complex with EsxB.

In Corynebacterium diphtheriae (strain ATCC 700971 / NCTC 13129 / Biotype gravis), this protein is ESAT-6-like protein EsxB.